The chain runs to 184 residues: MYKKFFDGVIEVITGPMFSGKSDELIKRIKILTYADIKTLVIKPSVDYRFSQCEIVSRSGLKIPTFLARTTQEIRDLFTRDNYQAIAIDEIQFFDEEIVTFLEQIADKGIRVIVSGLDQDFRRKPFGSLPNLMAIAENVTKLQAVCSLCKRAATTTARKVLNEAQTLIGDQDEYEARCRACHSL.

ATP contacts are provided by residues 15 to 22 (GPMFSGKS) and 89 to 92 (DEIQ). Catalysis depends on Glu90, which acts as the Proton acceptor. Positions 146, 149, 178, and 181 each coordinate Zn(2+).

It belongs to the thymidine kinase family. Homotetramer.

The protein localises to the cytoplasm. The enzyme catalyses thymidine + ATP = dTMP + ADP + H(+). This is Thymidine kinase from Mesomycoplasma hyopneumoniae (strain 232) (Mycoplasma hyopneumoniae).